A 529-amino-acid polypeptide reads, in one-letter code: ADP,ATP carrier protein 1 (529 aa).

A run of 12 helical transmembrane segments spans residues 24-44, 63-83, 93-113, 124-144, 149-169, 184-204, 220-240, 284-304, 322-342, 356-376, 381-401, and 463-483; these read LKKV…YTIL, IPFI…LIYA, ALFY…PLVI, DFAD…IAML, FAAF…LMFW, FYAL…PAIV, WGVT…IIAA, YMLL…LVEV, AFMG…MLFI, ALVT…LVIF, TGLV…VGAV, and ISAM…VWLT. A compositionally biased stretch (low complexity) spans 509–520; the sequence is AAEKEASPAAKE. The segment at 509-529 is disordered; that stretch reads AAEKEASPAAKEVSPAIEGVS.

The protein belongs to the ADP/ATP translocase tlc family.

Its subcellular location is the cell membrane. This is ADP,ATP carrier protein 1 (tlcA) from Chlamydia muridarum (strain MoPn / Nigg).